A 239-amino-acid polypeptide reads, in one-letter code: Transmembrane ascorbate ferrireductase 1 (239 aa).

Residues 1-7 lie on the Cytoplasmic side of the membrane; the sequence is MAVRINA. A helical transmembrane segment spans residues 8 to 28; the sequence is MAVTFVAHALAVIAAIMVLVW. Positions 13-216 constitute a Cytochrome b561 domain; the sequence is VAHALAVIAA…FGAFVVLTAS (204 aa). Over 29–45 the chain is Lumenal; that stretch reads SISYRGGLAWEATNKNL. The chain crosses the membrane as a helical span at residues 46–66; that stretch reads IFNLHPVLMLIGFIILGGEAI. Residue His-50 participates in heme b binding. At 67–81 the chain is on the cytoplasmic side; that stretch reads ISYKSLPLEKPVKKL. Residues 82-102 traverse the membrane as a helical segment; it reads IHLILHAIALALGIFGICAAF. His-83 and His-117 together coordinate heme b. Over 103 to 119 the chain is Lumenal; that stretch reads KNHNESHIPNLYSLHSW. Residues 120–140 form a helical membrane-spanning segment; sequence IGIGVISLYGFQWVYSFIVFF. Residues 141–155 lie on the Cytoplasmic side of the membrane; it reads FPGGSTNLKSGLLPW. His-156 is a binding site for heme b. A helical membrane pass occupies residues 156–176; sequence HAMLGLFVYILAVGNAALGFL. Topologically, residues 177–193 are lumenal; the sequence is EKLTFLENGGLDKYGSE. Residues 194-214 traverse the membrane as a helical segment; sequence AFLINFTAIITILFGAFVVLT. Over 215–239 the chain is Cytoplasmic; that stretch reads ASAESPSPSPSVSNDDSVDFSYSAI. The segment at 217–239 is disordered; that stretch reads AESPSPSPSVSNDDSVDFSYSAI. Residues 224–239 show a composition bias toward low complexity; the sequence is PSVSNDDSVDFSYSAI.

In terms of assembly, homodimer. It depends on heme b as a cofactor. As to expression, expressed in roots, seedlings and leaves. Lower expression in flowers. Expressed in the L1 layer of the shoot apex, in the epidermis of leaf primordia and young leaves and in vascular bundles. In the differentiation zone of the root, detected in the pericycle and in the epidermis, but not in the cortex. Strongly expressed in the lateral part of the root cap and in the epidermis of the root tip, but not in the meristematic tissue. Not expressed in lateral roots. In mature embryos, expressed in the epidermis, cotyledon tips and root tips.

Its subcellular location is the vacuole membrane. The catalysed reaction is Fe(3+)(out) + L-ascorbate(in) = monodehydro-L-ascorbate radical(in) + Fe(2+)(out) + H(+). Its function is as follows. Two-heme-containing cytochrome. Catalyzes ascorbate-dependent trans-membrane ferric-chelate reduction. Able to use dihydrolipoic acid (DHLA) as an alternative substrate to ascorbate. The sequence is that of Transmembrane ascorbate ferrireductase 1 (CYB561A) from Arabidopsis thaliana (Mouse-ear cress).